The primary structure comprises 710 residues: Polyribonucleotide nucleotidyltransferase (710 aa).

Residues aspartate 486 and aspartate 492 each coordinate Mg(2+). Residues 553 to 612 (PRFETIKIHPDKIRDIIGKGGATIRSITEETNSSIDIDDDGTVKVYADDNEALQAALNRI) enclose the KH domain. Positions 622–690 (GAIYEGTVVR…QRGRIKLSIK (69 aa)) constitute an S1 motif domain.

The protein belongs to the polyribonucleotide nucleotidyltransferase family. In terms of assembly, component of the RNA degradosome, which is a multiprotein complex involved in RNA processing and mRNA degradation. It depends on Mg(2+) as a cofactor.

The protein localises to the cytoplasm. The enzyme catalyses RNA(n+1) + phosphate = RNA(n) + a ribonucleoside 5'-diphosphate. In terms of biological role, involved in mRNA degradation. Catalyzes the phosphorolysis of single-stranded polyribonucleotides processively in the 3'- to 5'-direction. In Cellvibrio japonicus (strain Ueda107) (Pseudomonas fluorescens subsp. cellulosa), this protein is Polyribonucleotide nucleotidyltransferase.